Reading from the N-terminus, the 122-residue chain is Large ribosomal subunit protein uL14 (122 aa).

The protein belongs to the universal ribosomal protein uL14 family. In terms of assembly, part of the 50S ribosomal subunit. Forms a cluster with proteins L3 and L19. In the 70S ribosome, L14 and L19 interact and together make contacts with the 16S rRNA in bridges B5 and B8.

Binds to 23S rRNA. Forms part of two intersubunit bridges in the 70S ribosome. This is Large ribosomal subunit protein uL14 from Thioalkalivibrio sulfidiphilus (strain HL-EbGR7).